Consider the following 201-residue polypeptide: Imidazole glycerol phosphate synthase subunit HisH (201 aa).

Residues lysine 2–methionine 201 form the Glutamine amidotransferase type-1 domain. The active-site Nucleophile is cysteine 77. Catalysis depends on residues histidine 183 and glutamate 185.

Heterodimer of HisH and HisF.

Its subcellular location is the cytoplasm. The enzyme catalyses 5-[(5-phospho-1-deoxy-D-ribulos-1-ylimino)methylamino]-1-(5-phospho-beta-D-ribosyl)imidazole-4-carboxamide + L-glutamine = D-erythro-1-(imidazol-4-yl)glycerol 3-phosphate + 5-amino-1-(5-phospho-beta-D-ribosyl)imidazole-4-carboxamide + L-glutamate + H(+). It carries out the reaction L-glutamine + H2O = L-glutamate + NH4(+). It participates in amino-acid biosynthesis; L-histidine biosynthesis; L-histidine from 5-phospho-alpha-D-ribose 1-diphosphate: step 5/9. In terms of biological role, IGPS catalyzes the conversion of PRFAR and glutamine to IGP, AICAR and glutamate. The HisH subunit catalyzes the hydrolysis of glutamine to glutamate and ammonia as part of the synthesis of IGP and AICAR. The resulting ammonia molecule is channeled to the active site of HisF. This Photorhabdus laumondii subsp. laumondii (strain DSM 15139 / CIP 105565 / TT01) (Photorhabdus luminescens subsp. laumondii) protein is Imidazole glycerol phosphate synthase subunit HisH.